The chain runs to 154 residues: uncharacterized protein (154 aa).

The N-terminal 42 residues, 1–42 (MLRVIWKHSSRVTRSIELSNISTTNHTRSLRRLSWISPRRFY), are a transit peptide targeting the mitochondrion.

Its subcellular location is the mitochondrion. This is an uncharacterized protein from Saccharomyces cerevisiae (strain ATCC 204508 / S288c) (Baker's yeast).